Here is an 814-residue protein sequence, read N- to C-terminus: Rho GTPase-activating protein 44 (814 aa).

A BAR domain is found at 14 to 249 (QTVGRAEKTE…IKAQQEAWVE (236 aa)). Residues 255–445 (KPLEEHLMIS…PIIQHADWFF (191 aa)) enclose the Rho-GAP domain. Disordered regions lie at residues 467 to 493 (ANYS…RPLS), 531 to 768 (SAGR…SMST), and 784 to 814 (STLR…STAL). Basic and acidic residues predominate over residues 479–489 (PADRRQPEQAR). Phosphoserine is present on Ser493. 6 stretches are compositionally biased toward low complexity: residues 531–541 (SAGRKAACAPP), 567–581 (SPAT…SGAS), 598–612 (SPGS…SIQG), 622–637 (PQPA…DQSP), 684–704 (SPYG…LSPA), and 741–752 (SVSLSASSPQST). An interaction with BST2 region spans residues 727–814 (KPRQRPTLPP…SEEESESTAL (88 aa)). Residues 790–805 (PLEHARRHSVTDKRDS) are compositionally biased toward basic and acidic residues. Phosphoserine is present on Ser805. The short motif at 811-814 (STAL) is the PDZ-binding element.

In terms of assembly, interacts with BST2 (via cytoplasmic domain). Interacts (probably via PDZ-binding motif) with SHANK3 (via PDZ domain); the interaction takes place in dendritic spines and promotes GRIA1 exocytosis. In terms of tissue distribution, expressed in brain, detected at high levels in hippocampal CA1 (at protein level).

The protein localises to the cell projection. It localises to the dendritic spine. It is found in the recycling endosome. Its subcellular location is the presynapse. The protein resides in the dendrite. Functionally, GTPase-activating protein (GAP) that stimulates the GTPase activity of Rho-type GTPases. Thereby, controls Rho-type GTPases cycling between their active GTP-bound and inactive GDP-bound states. Acts as a GAP at least for CDC42 and RAC1. In neurons, is involved in dendritic spine formation and synaptic plasticity in a specific RAC1-GAP activity. Limits the initiation of exploratory dendritic filopodia. Recruited to actin-patches that seed filopodia, binds specifically to plasma membrane sections that are deformed inward by acto-myosin mediated contractile forces. Acts through GAP activity on RAC1 to reduce actin polymerization necessary for filopodia formation. In association with SHANK3, promotes GRIA1 exocytosis from recycling endosomes and spine morphological changes associated to long-term potentiation. This Rattus norvegicus (Rat) protein is Rho GTPase-activating protein 44.